We begin with the raw amino-acid sequence, 412 residues long: Divalent metal cation transporter MntH (412 aa).

The Cytoplasmic portion of the chain corresponds to 1 to 19; that stretch reads MTNYRVESSSGRAARKMRL. A helical transmembrane segment spans residues 20 to 39; that stretch reads ALMGPAFIAAIGYIDPGNFA. At 40-51 the chain is on the periplasmic side; the sequence is TNIQAGASFGYQ. Residues 52–71 form a helical membrane-spanning segment; sequence LLWVVVWANLMAMLIQILSA. The Cytoplasmic segment spans residues 72 to 95; that stretch reads KLGIATGKNLAEQIRDHYPRPVVW. Residues 96-118 traverse the membrane as a helical segment; the sequence is FYWVQAEIIAMATDLAEFIGAAI. Residues 119–125 lie on the Periplasmic side of the membrane; it reads GFKLILG. Residues 126-145 form a helical membrane-spanning segment; that stretch reads VSLLQGAVLTGIATFLILML. Residues 146–155 are Cytoplasmic-facing; sequence QRRGQKPLEK. Residues 156 to 175 form a helical membrane-spanning segment; the sequence is VIGGLLLFVAAAYIVELIFS. Residues 176-196 lie on the Periplasmic side of the membrane; that stretch reads QPNLAQLGKGMVIPSLPTSEA. A helical membrane pass occupies residues 197–220; the sequence is VFLAAGVLGATIMPHVIYLHSSLT. Residues 221–238 are Cytoplasmic-facing; the sequence is QHLHGGSRQQRYSATKWD. A helical membrane pass occupies residues 239 to 258; the sequence is VAIAMTIAGFVNLAMMATAA. At 259-276 the chain is on the periplasmic side; sequence AAFHFSGHTGVADLDEAY. Residues 277-297 form a helical membrane-spanning segment; the sequence is LTLQPLLSHAAATVFGLSLVA. Topologically, residues 298–327 are cytoplasmic; that stretch reads AGLSSTVVGTLAGQVVMQGFIRFHIPLWVR. Residues 328–344 traverse the membrane as a helical segment; the sequence is RTVTMLPSFIVILMGLD. The Periplasmic segment spans residues 345-350; that stretch reads PTRILV. A helical transmembrane segment spans residues 351 to 370; that stretch reads MSQVLLSFGIALALVPLLIF. At 371–387 the chain is on the cytoplasmic side; that stretch reads TSDSKLMGDLVNSKRVK. Residues 388–406 traverse the membrane as a helical segment; it reads QTGWVIVVLVVALNIWLLV. Residues 407–412 are Periplasmic-facing; that stretch reads GTALGL.

It belongs to the NRAMP family.

Its subcellular location is the cell inner membrane. Functionally, h(+)-stimulated, divalent metal cation uptake system. The sequence is that of Divalent metal cation transporter MntH from Escherichia fergusonii (strain ATCC 35469 / DSM 13698 / CCUG 18766 / IAM 14443 / JCM 21226 / LMG 7866 / NBRC 102419 / NCTC 12128 / CDC 0568-73).